An 89-amino-acid polypeptide reads, in one-letter code: UPF0367 protein MAE_19160 (89 aa).

It belongs to the UPF0367 family.

The sequence is that of UPF0367 protein MAE_19160 from Microcystis aeruginosa (strain NIES-843 / IAM M-2473).